We begin with the raw amino-acid sequence, 830 residues long: Lon protease 3 (830 aa).

A Lon N-terminal domain is found at 19–213; that stretch reads VPLLPLRDII…RLIELMQAEI (195 aa). 367–374 contributes to the ATP binding site; it reads GPPGVGKT. The Lon proteolytic domain occupies 604 to 784; that stretch reads RDEVGLVNGL…DDVLREALIL (181 aa). Catalysis depends on residues Ser690 and Lys733. Over residues 811–823 the composition is skewed to low complexity; it reads PVKAPPAAAGEPT. The tract at residues 811-830 is disordered; the sequence is PVKAPPAAAGEPTPAAPPGA.

The protein belongs to the peptidase S16 family. As to quaternary structure, homohexamer. Organized in a ring with a central cavity.

The protein resides in the cytoplasm. The catalysed reaction is Hydrolysis of proteins in presence of ATP.. ATP-dependent serine protease that mediates the selective degradation of mutant and abnormal proteins as well as certain short-lived regulatory proteins. Required for cellular homeostasis and for survival from DNA damage and developmental changes induced by stress. Degrades polypeptides processively to yield small peptide fragments that are 5 to 10 amino acids long. Binds to DNA in a double-stranded, site-specific manner. The polypeptide is Lon protease 3 (Sorangium cellulosum (strain So ce56) (Polyangium cellulosum (strain So ce56))).